We begin with the raw amino-acid sequence, 429 residues long: Cell wall protein ECM33 (429 aa).

The first 19 residues, 1–19, serve as a signal peptide directing secretion; the sequence is MQFKNALTATAILSASALA. Residues Asn21, Asn56, Asn82, Asn196, Asn209, Asn227, Asn234, Asn241, Asn267, Asn279, Asn304, and Asn328 are each glycosylated (N-linked (GlcNAc...) asparagine). Ser339 carries the post-translational modification Phosphoserine. The segment covering 361–401 has biased composition (low complexity); it reads LSSTSTESSKSSATSSASSSGDASNAQANVSASASSSSSSS. The tract at residues 361–410 is disordered; the sequence is LSSTSTESSKSSATSSASSSGDASNAQANVSASASSSSSSSKKSKGAAPE. Residue Asn389 is glycosylated (N-linked (GlcNAc...) asparagine). Residue Gly406 is the site of GPI-anchor amidated glycine attachment. The propeptide at 407–429 is removed in mature form; the sequence is AAPELVPATSFMGVVAAVAVALL.

It belongs to the SPS2 family. Post-translationally, the GPI-anchor is attached to the protein in the endoplasmic reticulum and serves to target the protein to the cell surface. There, the glucosamine-inositol phospholipid moiety is cleaved off and the GPI-modified mannoprotein is covalently attached via its lipidless GPI glycan remnant to the 1,6-beta-glucan of the outer cell wall layer.

The protein resides in the cell membrane. It localises to the secreted. The protein localises to the cell wall. Functionally, required for proper cell wall integrity and for the correct assembly of the mannoprotein outer layer of the cell wall. Important for apical bud growth. The chain is Cell wall protein ECM33 (ECM33) from Saccharomyces cerevisiae (strain AWRI1631) (Baker's yeast).